The sequence spans 331 residues: High-affinity nickel-transport protein NixA (331 aa).

Helical transmembrane passes span 3-23, 77-97, 110-130, 184-204, 213-233, 259-279, and 302-322; these read LWFP…ALLF, MGHS…IAWA, VVGT…NAII, PVGF…LLAL, VVGM…FDTL, ITAL…FQVI, and DLGY…FFLW.

This sequence belongs to the NiCoT transporter (TC 2.A.52) family.

It is found in the cell inner membrane. Functionally, high-affinity nickel intake protein. Imports nickel ions in an energy-dependent fashion. Necessary for the expression of catalytically active urease. This is High-affinity nickel-transport protein NixA (nixA) from Helicobacter pylori (strain J99 / ATCC 700824) (Campylobacter pylori J99).